The primary structure comprises 294 residues: Glycine--tRNA ligase alpha subunit (294 aa).

Belongs to the class-II aminoacyl-tRNA synthetase family. As to quaternary structure, tetramer of two alpha and two beta subunits.

The protein localises to the cytoplasm. It carries out the reaction tRNA(Gly) + glycine + ATP = glycyl-tRNA(Gly) + AMP + diphosphate. In Polynucleobacter asymbioticus (strain DSM 18221 / CIP 109841 / QLW-P1DMWA-1) (Polynucleobacter necessarius subsp. asymbioticus), this protein is Glycine--tRNA ligase alpha subunit.